A 216-amino-acid chain; its full sequence is Cytidylate kinase (216 aa).

7–15 (GPSGTGKST) provides a ligand contact to ATP.

Belongs to the cytidylate kinase family. Type 1 subfamily.

The protein resides in the cytoplasm. It carries out the reaction CMP + ATP = CDP + ADP. The enzyme catalyses dCMP + ATP = dCDP + ADP. In Chlamydia felis (strain Fe/C-56) (Chlamydophila felis), this protein is Cytidylate kinase.